Here is a 124-residue protein sequence, read N- to C-terminus: UPF0344 protein BH2983 (124 aa).

The next 4 membrane-spanning stretches (helical) occupy residues 15 to 35 (GSWA…KAGK), 40 to 60 (KILH…GAGM), 61 to 81 (LVYW…IVLI), and 102 to 122 (IYWI…YNVI).

This sequence belongs to the UPF0344 family.

The protein resides in the cell membrane. This chain is UPF0344 protein BH2983, found in Halalkalibacterium halodurans (strain ATCC BAA-125 / DSM 18197 / FERM 7344 / JCM 9153 / C-125) (Bacillus halodurans).